Consider the following 508-residue polypeptide: UDP-N-acetylmuramoyl-L-alanyl-D-glutamate--2,6-diaminopimelate ligase (508 aa).

Residue Ser33 coordinates UDP-N-acetyl-alpha-D-muramoyl-L-alanyl-D-glutamate. 121–127 is an ATP binding site; sequence GTNGKST. Residues Asn162, 163–164, Ser190, Gln196, and Arg198 contribute to the UDP-N-acetyl-alpha-D-muramoyl-L-alanyl-D-glutamate site; that span reads TT. N6-carboxylysine is present on Lys230. Residues Arg399, 423 to 426, Gly474, and Glu478 each bind meso-2,6-diaminopimelate; that span reads DNPR. A Meso-diaminopimelate recognition motif motif is present at residues 423–426; the sequence is DNPR.

The protein belongs to the MurCDEF family. MurE subfamily. It depends on Mg(2+) as a cofactor. Carboxylation is probably crucial for Mg(2+) binding and, consequently, for the gamma-phosphate positioning of ATP.

It is found in the cytoplasm. The enzyme catalyses UDP-N-acetyl-alpha-D-muramoyl-L-alanyl-D-glutamate + meso-2,6-diaminopimelate + ATP = UDP-N-acetyl-alpha-D-muramoyl-L-alanyl-gamma-D-glutamyl-meso-2,6-diaminopimelate + ADP + phosphate + H(+). The protein operates within cell wall biogenesis; peptidoglycan biosynthesis. Catalyzes the addition of meso-diaminopimelic acid to the nucleotide precursor UDP-N-acetylmuramoyl-L-alanyl-D-glutamate (UMAG) in the biosynthesis of bacterial cell-wall peptidoglycan. The chain is UDP-N-acetylmuramoyl-L-alanyl-D-glutamate--2,6-diaminopimelate ligase from Buchnera aphidicola subsp. Baizongia pistaciae (strain Bp).